A 515-amino-acid chain; its full sequence is Cytosolic Fe-S cluster assembly factor NAR1 homolog (515 aa).

[4Fe-4S] cluster contacts are provided by Cys-19, Cys-65, Cys-68, Cys-71, Cys-192, Cys-247, Cys-428, and Cys-432.

Belongs to the NARF family.

In terms of biological role, component of the cytosolic Fe/S protein assembly machinery. Required for maturation of extramitochondrial Fe/S proteins. May play a role in the transfer of pre-assembled Fe/S clusters to target apoproteins. In Schizosaccharomyces japonicus (strain yFS275 / FY16936) (Fission yeast), this protein is Cytosolic Fe-S cluster assembly factor NAR1 homolog.